The primary structure comprises 189 residues: MITTSVTEAAECLQQGQVLAYPTEAVWGLGCDPFNEQAFQKILELKQRPIEKGVILLAGHISQVEHLLTSLPQTTQQEIIDCWTNHQPSERATTWLLPADQHIPSWIKGEHPLVAVRVTTHPLCVALCNAFHGFIVSTSANPSGQEPAHSLQDACQYFGSQLNYLNGDLGQSQQPSRIINALTGEVIRP.

The YrdC-like domain occupies 3–189 (TTSVTEAAEC…NALTGEVIRP (187 aa)).

The protein belongs to the SUA5 family. TsaC subfamily.

It localises to the cytoplasm. The enzyme catalyses L-threonine + hydrogencarbonate + ATP = L-threonylcarbamoyladenylate + diphosphate + H2O. Its function is as follows. Required for the formation of a threonylcarbamoyl group on adenosine at position 37 (t(6)A37) in tRNAs that read codons beginning with adenine. Catalyzes the conversion of L-threonine, HCO(3)(-)/CO(2) and ATP to give threonylcarbamoyl-AMP (TC-AMP) as the acyladenylate intermediate, with the release of diphosphate. The polypeptide is Threonylcarbamoyl-AMP synthase (Acinetobacter baumannii (strain ACICU)).